A 257-amino-acid polypeptide reads, in one-letter code: uncharacterized protein (257 aa).

Ser127 carries the phosphoserine modification. 2 disordered regions span residues 146–174 and 210–231; these read HEDPKPSSTYNSSISAPPEDFKQDGEDDG and AREKATELKQRRQEQATNRREK. A compositionally biased stretch (polar residues) spans 151 to 160; the sequence is PSSTYNSSIS. Residues 196–257 are a coiled coil; the sequence is HVRMVREVHE…QQQQEDEQKT (62 aa).

This is an uncharacterized protein from Arabidopsis thaliana (Mouse-ear cress).